Here is a 201-residue protein sequence, read N- to C-terminus: MSIQHFQTKLGITKYSIVTNSNDSVTLRLMTEHDLAMLYEWLNRSHIVEWWGGEEARPTLADVQEQYLPSVLAQESVTPYIAMLNGEPIGYAQSYVALGSGDGWWEEETDPGVRGIDQLLANASQLGKGLGTKLVRALVELLFNDPEVTKIQTDPSPSNLRAIRCYEKAGFERQGTVTTPDGPAVYMVQTRQAFERTRSVA.

The N-acetyltransferase domain occupies 25-192 (VTLRLMTEHD…PAVYMVQTRQ (168 aa)). Tryptophan 51 and aspartate 154 together coordinate substrate. Asparagine 159 is a binding site for acetyl-CoA.

Homodimer.

The enzyme catalyses kanamycin B + acetyl-CoA = N(6')-acetylkanamycin B + CoA + H(+). In terms of biological role, catalyzes the transfer of an acetyl group from acetyl-CoA to the 6'-amino group of aminoglycoside molecules conferring resistance to antibiotics containing the purpurosamine ring including amikacin. The sequence is that of Aminoglycoside N(6')-acetyltransferase type 1 (aacA4) from Klebsiella pneumoniae.